The following is a 141-amino-acid chain: Ribonuclease P protein component (141 aa).

Disordered stretches follow at residues 37–56 (RTEEESNAAKTGDNPRVGFT) and 114–141 (RRITAKGERRSGGKRRTERPEPGPVNGK). Basic and acidic residues predominate over residues 114 to 124 (RRITAKGERRS).

The protein belongs to the RnpA family. Consists of a catalytic RNA component (M1 or rnpB) and a protein subunit.

The enzyme catalyses Endonucleolytic cleavage of RNA, removing 5'-extranucleotides from tRNA precursor.. RNaseP catalyzes the removal of the 5'-leader sequence from pre-tRNA to produce the mature 5'-terminus. It can also cleave other RNA substrates such as 4.5S RNA. The protein component plays an auxiliary but essential role in vivo by binding to the 5'-leader sequence and broadening the substrate specificity of the ribozyme. This Brucella melitensis biotype 2 (strain ATCC 23457) protein is Ribonuclease P protein component.